The sequence spans 176 residues: HTH-type transcriptional regulator DctR (176 aa).

One can recognise an HTH luxR-type domain in the interval valine 109–tyrosine 174. Residues threonine 133–histidine 152 constitute a DNA-binding region (H-T-H motif).

In terms of biological role, may act as a transcriptional regulator of dctA. This chain is HTH-type transcriptional regulator DctR (dctR), found in Shigella flexneri.